Here is a 250-residue protein sequence, read N- to C-terminus: N-acyl homoserine lactonase (250 aa).

Residues His-104, His-106, Asp-108, His-109, His-169, Asp-191, and His-235 each coordinate Zn(2+).

It belongs to the metallo-beta-lactamase superfamily. In terms of assembly, monomer. Zn(2+) is required as a cofactor.

The catalysed reaction is an N-acyl-L-homoserine lactone + H2O = an N-acyl-L-homoserine + H(+). With respect to regulation, completely inhibited by Cu(2+) and Ag(+). Partially inhibited by Cr(2+), Pb(2+) and Fe(2+). Mg(2+), Ca(2+), Mn(2+), Co(2+), Ni(2+), Zn(2+) and Cd(2+) have no effect on activity. The chelating agents EDTA, 2,2'bipyridine and o-phenanthroline have no effect on enzyme activity. In terms of biological role, hydrolyzes acyl homoserine lactones with varying lengths of acyl chains, with a slight preference for substrates without 3-oxo substitution at the C3 position. Has only residual activity towards non-acyl lactones, and no activity towards non-cyclic esters. The protein is N-acyl homoserine lactonase of Bacillus sp.